The following is a 207-amino-acid chain: Small ribosomal subunit protein uS4 (207 aa).

The segment at 31-56 (KCKLDSKPGQHGRTSGARTSDYGNQL) is disordered. Positions 42-53 (GRTSGARTSDYG) are enriched in polar residues. The S4 RNA-binding domain occupies 97–157 (TRLDNVVYRM…EKSKKQVRIV (61 aa)).

The protein belongs to the universal ribosomal protein uS4 family. Part of the 30S ribosomal subunit. Contacts protein S5. The interaction surface between S4 and S5 is involved in control of translational fidelity.

Functionally, one of the primary rRNA binding proteins, it binds directly to 16S rRNA where it nucleates assembly of the body of the 30S subunit. With S5 and S12 plays an important role in translational accuracy. The chain is Small ribosomal subunit protein uS4 from Herminiimonas arsenicoxydans.